The primary structure comprises 1245 residues: ATP-dependent helicase/nuclease subunit A (1245 aa).

Residues 4-477 enclose the UvrD-like helicase ATP-binding domain; that stretch reads TKWTDEQLSA…IQLYKNFRSR (474 aa). Residue 25-32 participates in ATP binding; it reads AAAGSGKT. Positions 517–815 constitute a UvrD-like helicase C-terminal domain; that stretch reads KFKDTIVGGP…RIMSIHKSKG (299 aa).

The protein belongs to the helicase family. AddA subfamily. In terms of assembly, heterodimer of AddA and AddB/RexB. Mg(2+) is required as a cofactor.

It catalyses the reaction Couples ATP hydrolysis with the unwinding of duplex DNA by translocating in the 3'-5' direction.. It carries out the reaction ATP + H2O = ADP + phosphate + H(+). Functionally, the heterodimer acts as both an ATP-dependent DNA helicase and an ATP-dependent, dual-direction single-stranded exonuclease. Recognizes the chi site generating a DNA molecule suitable for the initiation of homologous recombination. The AddA nuclease domain is required for chi fragment generation; this subunit has the helicase and 3' -&gt; 5' nuclease activities. This Clostridium beijerinckii (strain ATCC 51743 / NCIMB 8052) (Clostridium acetobutylicum) protein is ATP-dependent helicase/nuclease subunit A.